The following is a 486-amino-acid chain: Glutamyl-tRNA(Gln) amidotransferase subunit A (486 aa).

Catalysis depends on charge relay system residues K79 and S154. S178 acts as the Acyl-ester intermediate in catalysis.

It belongs to the amidase family. GatA subfamily. In terms of assembly, heterotrimer of A, B and C subunits.

The enzyme catalyses L-glutamyl-tRNA(Gln) + L-glutamine + ATP + H2O = L-glutaminyl-tRNA(Gln) + L-glutamate + ADP + phosphate + H(+). In terms of biological role, allows the formation of correctly charged Gln-tRNA(Gln) through the transamidation of misacylated Glu-tRNA(Gln) in organisms which lack glutaminyl-tRNA synthetase. The reaction takes place in the presence of glutamine and ATP through an activated gamma-phospho-Glu-tRNA(Gln). In Dehalococcoides mccartyi (strain ATCC BAA-2100 / JCM 16839 / KCTC 5957 / BAV1), this protein is Glutamyl-tRNA(Gln) amidotransferase subunit A.